A 418-amino-acid polypeptide reads, in one-letter code: Transcription termination factor Rho (418 aa).

The Rho RNA-BD domain maps to 48–123; that stretch reads DIYGDGVLEI…LKVNDINFDR (76 aa). Residues 169 to 174, 181 to 186, and arginine 212 each bind ATP; these read GKGQRG and KAGKTM.

It belongs to the Rho family. Homohexamer. The homohexamer assembles into an open ring structure.

In terms of biological role, facilitates transcription termination by a mechanism that involves Rho binding to the nascent RNA, activation of Rho's RNA-dependent ATPase activity, and release of the mRNA from the DNA template. The protein is Transcription termination factor Rho of Allochromatium vinosum (strain ATCC 17899 / DSM 180 / NBRC 103801 / NCIMB 10441 / D) (Chromatium vinosum).